Reading from the N-terminus, the 403-residue chain is Phosphoglycerate kinase (403 aa).

Substrate is bound by residues 22-24, Arg37, 60-63, Arg119, and Arg152; these read DFN and HFGR. Residues Lys202, Glu324, and 354–357 contribute to the ATP site; that span reads GGDT.

This sequence belongs to the phosphoglycerate kinase family. Monomer.

The protein localises to the cytoplasm. It catalyses the reaction (2R)-3-phosphoglycerate + ATP = (2R)-3-phospho-glyceroyl phosphate + ADP. It functions in the pathway carbohydrate degradation; glycolysis; pyruvate from D-glyceraldehyde 3-phosphate: step 2/5. This is Phosphoglycerate kinase from Maricaulis maris (strain MCS10) (Caulobacter maris).